The sequence spans 84 residues: Putative UPF0320 protein YAL068W-A (84 aa).

This sequence belongs to the UPF0320 family.

The chain is Putative UPF0320 protein YAL068W-A from Saccharomyces cerevisiae (strain ATCC 204508 / S288c) (Baker's yeast).